We begin with the raw amino-acid sequence, 232 residues long: MAAKLTKKRKTLAEKVQRDKAYPLSEAIKLIKECAKAKFNESIDVAINLGIDSRKSDQAIRGATVLPHGSGRTVKVAVFAQGDNVEKAKAAGADIVGLDDLAERIQGGDIDFDVVIATPETMRVVGKLGQVLGPRGLMPNPKVGTVTTDVASAVKNAKQGQVRYRTDKNGIIHCTIGKVNFEEKALEENFLALLNDIKKAKPSAAKGTYLKKLTLSSTMGPGIAIDRTTVGA.

It belongs to the universal ribosomal protein uL1 family. As to quaternary structure, part of the 50S ribosomal subunit.

Functionally, binds directly to 23S rRNA. The L1 stalk is quite mobile in the ribosome, and is involved in E site tRNA release. Protein L1 is also a translational repressor protein, it controls the translation of the L11 operon by binding to its mRNA. The protein is Large ribosomal subunit protein uL1 of Coxiella burnetii (strain CbuK_Q154) (Coxiella burnetii (strain Q154)).